A 253-amino-acid chain; its full sequence is Probable transcriptional regulatory protein Synpcc7942_1017 (253 aa).

The protein belongs to the TACO1 family.

The protein resides in the cytoplasm. The chain is Probable transcriptional regulatory protein Synpcc7942_1017 from Synechococcus elongatus (strain ATCC 33912 / PCC 7942 / FACHB-805) (Anacystis nidulans R2).